Here is a 421-residue protein sequence, read N- to C-terminus: ATP-dependent RNA helicase RhlB (421 aa).

The short motif at 9–37 (QKFSDFALHPQVVEALEKKGFYNCTPIQA) is the Q motif element. The region spanning 40 to 219 (LPLTLAGRDV…FEQMNNAEYV (180 aa)) is the Helicase ATP-binding domain. 53-60 (AQTGTGKT) provides a ligand contact to ATP. The DEAD box motif lies at 165–168 (DEAD). Residues 245–390 (RLLQTLIEEE…VSKYNPEALM (146 aa)) enclose the Helicase C-terminal domain. Positions 396–421 (PLRLTRSRPGNGPRRAGAPRNRRRSG) are disordered. Low complexity predominate over residues 402-414 (SRPGNGPRRAGAP).

Belongs to the DEAD box helicase family. RhlB subfamily. In terms of assembly, component of the RNA degradosome, which is a multiprotein complex involved in RNA processing and mRNA degradation.

It localises to the cytoplasm. The enzyme catalyses ATP + H2O = ADP + phosphate + H(+). DEAD-box RNA helicase involved in RNA degradation. Has RNA-dependent ATPase activity and unwinds double-stranded RNA. This Salmonella arizonae (strain ATCC BAA-731 / CDC346-86 / RSK2980) protein is ATP-dependent RNA helicase RhlB.